We begin with the raw amino-acid sequence, 199 residues long: Peroxiredoxin 2 (199 aa).

Positions 8-166 (AFIGQPAPNF…TLRLIQAFQF (159 aa)) constitute a Thioredoxin domain. Residue cysteine 53 is the Cysteine sulfenic acid (-SOH) intermediate of the active site.

The protein belongs to the peroxiredoxin family. AhpC/Prx1 subfamily. In terms of assembly, homodimer; disulfide-linked, upon oxidation.

It catalyses the reaction a hydroperoxide + [thioredoxin]-dithiol = an alcohol + [thioredoxin]-disulfide + H2O. In terms of biological role, thiol-specific peroxidase that catalyzes the reduction of hydrogen peroxide and organic hydroperoxides to water and alcohols, respectively. Plays a role in cell protection against oxidative stress by detoxifying peroxides and as sensor of hydrogen peroxide-mediated signaling events. The polypeptide is Peroxiredoxin 2 (tsa-2) (Brugia malayi (Filarial nematode worm)).